Consider the following 241-residue polypeptide: Translation initiation factor IF-3 (241 aa).

The interval 178–241 (KKTEAMAEAR…EAPAEASTEA (64 aa)) is disordered. Residues 180-197 (TEAMAEAREAQAARKAEA) show a composition bias toward basic and acidic residues. The span at 208–229 (ADEDIPEGELPEGEVPEAETTE) shows a compositional bias: acidic residues. A compositionally biased stretch (low complexity) spans 230 to 241 (AAEAPAEASTEA).

Belongs to the IF-3 family. As to quaternary structure, monomer.

The protein resides in the cytoplasm. In terms of biological role, IF-3 binds to the 30S ribosomal subunit and shifts the equilibrium between 70S ribosomes and their 50S and 30S subunits in favor of the free subunits, thus enhancing the availability of 30S subunits on which protein synthesis initiation begins. This chain is Translation initiation factor IF-3, found in Streptomyces avermitilis (strain ATCC 31267 / DSM 46492 / JCM 5070 / NBRC 14893 / NCIMB 12804 / NRRL 8165 / MA-4680).